The sequence spans 244 residues: 1-(5-phosphoribosyl)-5-[(5-phosphoribosylamino)methylideneamino] imidazole-4-carboxamide isomerase (244 aa).

Asp12 serves as the catalytic Proton acceptor. Asp131 serves as the catalytic Proton donor.

This sequence belongs to the HisA/HisF family.

The protein resides in the cytoplasm. The enzyme catalyses 1-(5-phospho-beta-D-ribosyl)-5-[(5-phospho-beta-D-ribosylamino)methylideneamino]imidazole-4-carboxamide = 5-[(5-phospho-1-deoxy-D-ribulos-1-ylimino)methylamino]-1-(5-phospho-beta-D-ribosyl)imidazole-4-carboxamide. It functions in the pathway amino-acid biosynthesis; L-histidine biosynthesis; L-histidine from 5-phospho-alpha-D-ribose 1-diphosphate: step 4/9. The sequence is that of 1-(5-phosphoribosyl)-5-[(5-phosphoribosylamino)methylideneamino] imidazole-4-carboxamide isomerase from Nocardioides sp. (strain ATCC BAA-499 / JS614).